A 514-amino-acid polypeptide reads, in one-letter code: Flagellin B (514 aa).

This sequence belongs to the bacterial flagellin family. Heteromer of FlaA and FlaB. FlaB is located proximal to the hook while the remainder of the filament is composed of the predominant FlaA.

It is found in the secreted. It localises to the bacterial flagellum. Flagellin is the subunit protein which polymerizes to form the filaments of bacterial flagella. Important for motility and virulence. In Helicobacter pylori (strain ATCC 700392 / 26695) (Campylobacter pylori), this protein is Flagellin B (flaB).